The sequence spans 416 residues: tRNA(Met) cytidine acetate ligase (416 aa).

Residues valine 7 to histidine 20, glycine 101, asparagine 162, and arginine 187 to isoleucine 188 contribute to the ATP site.

The protein belongs to the TmcAL family.

Its subcellular location is the cytoplasm. It catalyses the reaction cytidine(34) in elongator tRNA(Met) + acetate + ATP = N(4)-acetylcytidine(34) in elongator tRNA(Met) + AMP + diphosphate. In terms of biological role, catalyzes the formation of N(4)-acetylcytidine (ac(4)C) at the wobble position of elongator tRNA(Met), using acetate and ATP as substrates. First activates an acetate ion to form acetyladenylate (Ac-AMP) and then transfers the acetyl group to tRNA to form ac(4)C34. This Halalkalibacterium halodurans (strain ATCC BAA-125 / DSM 18197 / FERM 7344 / JCM 9153 / C-125) (Bacillus halodurans) protein is tRNA(Met) cytidine acetate ligase.